The chain runs to 274 residues: 2,3,4,5-tetrahydropyridine-2,6-dicarboxylate N-succinyltransferase (274 aa).

Substrate-binding residues include Arg-106 and Asp-143.

The protein belongs to the transferase hexapeptide repeat family. In terms of assembly, homotrimer.

It is found in the cytoplasm. The catalysed reaction is (S)-2,3,4,5-tetrahydrodipicolinate + succinyl-CoA + H2O = (S)-2-succinylamino-6-oxoheptanedioate + CoA. Its pathway is amino-acid biosynthesis; L-lysine biosynthesis via DAP pathway; LL-2,6-diaminopimelate from (S)-tetrahydrodipicolinate (succinylase route): step 1/3. This Paracidovorax citrulli (strain AAC00-1) (Acidovorax citrulli) protein is 2,3,4,5-tetrahydropyridine-2,6-dicarboxylate N-succinyltransferase.